Reading from the N-terminus, the 324-residue chain is NADH-ubiquinone oxidoreductase chain 1 (324 aa).

Helical transmembrane passes span 10–30, 76–96, 107–127, 143–163, 178–198, 229–249, 260–280, and 300–320; these read MIMT…LTLV, FLFI…WIPL, LGLL…LWSG, VAQT…TIML, PIYL…STLA, LFFL…ITLF, ELFS…FLWV, and FLPL…SYAG.

The protein belongs to the complex I subunit 1 family.

It localises to the mitochondrion inner membrane. It catalyses the reaction a ubiquinone + NADH + 5 H(+)(in) = a ubiquinol + NAD(+) + 4 H(+)(out). Its function is as follows. Core subunit of the mitochondrial membrane respiratory chain NADH dehydrogenase (Complex I) that is believed to belong to the minimal assembly required for catalysis. Complex I functions in the transfer of electrons from NADH to the respiratory chain. The immediate electron acceptor for the enzyme is believed to be ubiquinone. The sequence is that of NADH-ubiquinone oxidoreductase chain 1 (MT-ND1) from Excalfactoria chinensis (Blue-breasted quail).